The primary structure comprises 496 residues: Protein RepS (496 aa).

Residues 120–141 (SDILTTAIDLGFMPTLIIKSDK) mediate DNA binding.

Essential for replication. In Streptococcus pyogenes, this protein is Protein RepS (repS).